Consider the following 173-residue polypeptide: Peptide methionine sulfoxide reductase MsrA (173 aa).

Cys-10 is an active-site residue.

Belongs to the MsrA Met sulfoxide reductase family.

The enzyme catalyses L-methionyl-[protein] + [thioredoxin]-disulfide + H2O = L-methionyl-(S)-S-oxide-[protein] + [thioredoxin]-dithiol. The catalysed reaction is [thioredoxin]-disulfide + L-methionine + H2O = L-methionine (S)-S-oxide + [thioredoxin]-dithiol. Functionally, has an important function as a repair enzyme for proteins that have been inactivated by oxidation. Catalyzes the reversible oxidation-reduction of methionine sulfoxide in proteins to methionine. The sequence is that of Peptide methionine sulfoxide reductase MsrA from Acinetobacter baumannii (strain AB307-0294).